The primary structure comprises 124 residues: Small ribosomal subunit protein uS13 (124 aa).

Positions G95–A124 are disordered.

Belongs to the universal ribosomal protein uS13 family. Part of the 30S ribosomal subunit. Forms a loose heterodimer with protein S19. Forms two bridges to the 50S subunit in the 70S ribosome.

Functionally, located at the top of the head of the 30S subunit, it contacts several helices of the 16S rRNA. In the 70S ribosome it contacts the 23S rRNA (bridge B1a) and protein L5 of the 50S subunit (bridge B1b), connecting the 2 subunits; these bridges are implicated in subunit movement. Contacts the tRNAs in the A and P-sites. This is Small ribosomal subunit protein uS13 from Syntrophobacter fumaroxidans (strain DSM 10017 / MPOB).